Reading from the N-terminus, the 307-residue chain is 1-phosphofructokinase (307 aa).

ATP contacts are provided by residues 217-222 (SMGSDG) and 249-250 (GD). D250 functions as the Proton acceptor in the catalytic mechanism.

This sequence belongs to the carbohydrate kinase PfkB family.

It catalyses the reaction beta-D-fructose 1-phosphate + ATP = beta-D-fructose 1,6-bisphosphate + ADP + H(+). Functionally, catalyzes the ATP-dependent phosphorylation of fructose-l-phosphate to fructose-l,6-bisphosphate. The polypeptide is 1-phosphofructokinase (fruK) (Borreliella burgdorferi (strain ATCC 35210 / DSM 4680 / CIP 102532 / B31) (Borrelia burgdorferi)).